Reading from the N-terminus, the 583-residue chain is Membrane protein insertase YidC (583 aa).

6 helical membrane-spanning segments follow: residues Ser-5 to Pro-25, Pro-341 to Tyr-361, Gly-362 to Ala-382, Ile-427 to Phe-447, Phe-473 to Val-493, and Ala-520 to Phe-540.

This sequence belongs to the OXA1/ALB3/YidC family. Type 1 subfamily. Interacts with the Sec translocase complex via SecD. Specifically interacts with transmembrane segments of nascent integral membrane proteins during membrane integration.

Its subcellular location is the cell inner membrane. Functionally, required for the insertion and/or proper folding and/or complex formation of integral membrane proteins into the membrane. Involved in integration of membrane proteins that insert both dependently and independently of the Sec translocase complex, as well as at least some lipoproteins. Aids folding of multispanning membrane proteins. The sequence is that of Membrane protein insertase YidC from Pelodictyon phaeoclathratiforme (strain DSM 5477 / BU-1).